A 195-amino-acid chain; its full sequence is Exosome complex component CSL4 (195 aa).

Phosphoserine occurs at positions 21 and 98. Positions 66-147 (DVGAIVTCKV…AQSNYLLTTA (82 aa)) constitute an S1 motif domain.

It belongs to the CSL4 family. As to quaternary structure, component of the RNA exosome core complex (Exo-9), composed of EXOSC1, EXOSC2, EXOSC3, EXOSC4, EXOSC5, EXOSC6, EXOSC7, EXOSC8 and EXOSC9; within the complex interacts with EXOSC6. The catalytically inactive RNA exosome core complex (Exo-9) associates with the catalytic subunit EXOSC10/RRP6. Exo-9 may associate with DIS3 to form the nucleolar exosome complex, or DIS3L to form the cytoplasmic exosome complex. Exo-9 is formed by a hexameric base ring consisting of the heterodimers EXOSC4-EXOSC9, EXOSC5-EXOSC8 and EXOSC6-EXOSC7, and a cap ring consisting of EXOSC1, EXOSC2 and EXOSC3. The RNA exosome complex associates with cofactors C1D/RRP47, MPHOSPH6/MPP6 and MTREX/MTR4. Interacts with DDX60.

The protein localises to the nucleus. Its subcellular location is the nucleolus. It is found in the cytoplasm. Functionally, non-catalytic component of the RNA exosome complex which has 3'-&gt;5' exoribonuclease activity and participates in a multitude of cellular RNA processing and degradation events. In the nucleus, the RNA exosome complex is involved in proper maturation of stable RNA species such as rRNA, snRNA and snoRNA, in the elimination of RNA processing by-products and non-coding 'pervasive' transcripts, such as antisense RNA species and promoter-upstream transcripts (PROMPTs), and of mRNAs with processing defects, thereby limiting or excluding their export to the cytoplasm. The RNA exosome may be involved in Ig class switch recombination (CSR) and/or Ig variable region somatic hypermutation (SHM) by targeting AICDA deamination activity to transcribed dsDNA substrates. In the cytoplasm, the RNA exosome complex is involved in general mRNA turnover and specifically degrades inherently unstable mRNAs containing AU-rich elements (AREs) within their 3' untranslated regions, and in RNA surveillance pathways, preventing translation of aberrant mRNAs. It seems to be involved in degradation of histone mRNA. The catalytic inactive RNA exosome core complex of 9 subunits (Exo-9) is proposed to play a pivotal role in the binding and presentation of RNA for ribonucleolysis, and to serve as a scaffold for the association with catalytic subunits and accessory proteins or complexes. EXOSC1 as peripheral part of the Exo-9 complex stabilizes the hexameric ring of RNase PH-domain subunits through contacts with EXOSC6 and EXOSC8. The protein is Exosome complex component CSL4 (EXOSC1) of Homo sapiens (Human).